A 1099-amino-acid polypeptide reads, in one-letter code: Carbamoyl phosphate synthase large chain (1099 aa).

Residues 1–402 (MPKREDIKRI…ALGKALRSLE (402 aa)) are carboxyphosphate synthetic domain. The ATP site is built by arginine 129, arginine 169, glycine 175, glycine 176, glutamate 208, valine 210, glutamate 215, glycine 241, isoleucine 242, histidine 243, glutamine 285, and glutamate 299. In terms of domain architecture, ATP-grasp 1 spans 133 to 328 (KETMEKAGLE…IAKVAALLAV (196 aa)). The Mg(2+) site is built by glutamine 285, glutamate 299, and asparagine 301. Mn(2+)-binding residues include glutamine 285, glutamate 299, and asparagine 301. The segment at 403-541 (LDAAPKLDLE…STYNGVENEA (139 aa)) is oligomerization domain. The segment at 542–944 (VPSDREKIMI…AFAKAQIAAG (403 aa)) is carbamoyl phosphate synthetic domain. The 192-residue stretch at 666–857 (AKLLKQIGLK…VARIAAKIMV (192 aa)) folds into the ATP-grasp 2 domain. Residues arginine 702, lysine 741, leucine 743, glutamate 748, glycine 773, valine 774, histidine 775, serine 776, glutamine 816, and glutamate 828 each contribute to the ATP site. The Mg(2+) site is built by glutamine 816, glutamate 828, and asparagine 830. Residues glutamine 816, glutamate 828, and asparagine 830 each contribute to the Mn(2+) site. Positions 945–1099 (NPLPTTGAIL…VRRLTDTWKM (155 aa)) constitute an MGS-like domain. The interval 945–1099 (NPLPTTGAIL…VRRLTDTWKM (155 aa)) is allosteric domain.

It belongs to the CarB family. As to quaternary structure, composed of two chains; the small (or glutamine) chain promotes the hydrolysis of glutamine to ammonia, which is used by the large (or ammonia) chain to synthesize carbamoyl phosphate. Tetramer of heterodimers (alpha,beta)4. Mg(2+) is required as a cofactor. It depends on Mn(2+) as a cofactor.

It carries out the reaction hydrogencarbonate + L-glutamine + 2 ATP + H2O = carbamoyl phosphate + L-glutamate + 2 ADP + phosphate + 2 H(+). The enzyme catalyses hydrogencarbonate + NH4(+) + 2 ATP = carbamoyl phosphate + 2 ADP + phosphate + 2 H(+). Its pathway is amino-acid biosynthesis; L-arginine biosynthesis; carbamoyl phosphate from bicarbonate: step 1/1. The protein operates within pyrimidine metabolism; UMP biosynthesis via de novo pathway; (S)-dihydroorotate from bicarbonate: step 1/3. In terms of biological role, large subunit of the glutamine-dependent carbamoyl phosphate synthetase (CPSase). CPSase catalyzes the formation of carbamoyl phosphate from the ammonia moiety of glutamine, carbonate, and phosphate donated by ATP, constituting the first step of 2 biosynthetic pathways, one leading to arginine and/or urea and the other to pyrimidine nucleotides. The large subunit (synthetase) binds the substrates ammonia (free or transferred from glutamine from the small subunit), hydrogencarbonate and ATP and carries out an ATP-coupled ligase reaction, activating hydrogencarbonate by forming carboxy phosphate which reacts with ammonia to form carbamoyl phosphate. This is Carbamoyl phosphate synthase large chain from Thermotoga maritima (strain ATCC 43589 / DSM 3109 / JCM 10099 / NBRC 100826 / MSB8).